The chain runs to 46 residues: Thymosin beta-a (46 aa).

Over residues 21-30 (TNTAEKNTLP) the composition is skewed to polar residues. The segment at 21–46 (TNTAEKNTLPTKEDIDQEKKAAEGGK) is disordered. The segment covering 31–46 (TKEDIDQEKKAAEGGK) has biased composition (basic and acidic residues).

The protein belongs to the thymosin beta family.

It is found in the cytoplasm. Its subcellular location is the cytoskeleton. Its function is as follows. Plays an important role in the organization of the cytoskeleton. Binds to and sequesters actin monomers (G actin) and therefore inhibits actin polymerization. The protein is Thymosin beta-a of Cyprinus carpio (Common carp).